The chain runs to 399 residues: Bombesin receptor subtype-3 (399 aa).

Topologically, residues 1–41 (MSQKQPQSPNQTLISITNDTESSSSVVSNDTTNKGWTGDNS) are extracellular. N-linked (GlcNAc...) asparagine glycosylation is found at Asn10 and Asn18. Residues 42 to 63 (PGIEALCAIYITYAVIISVGIL) form a helical membrane-spanning segment. The Cytoplasmic segment spans residues 64–82 (GNAILIKVFFKTKSMQTVP). A helical transmembrane segment spans residues 83-103 (NIFITSLALGDLLLLLTCVPV). The Extracellular portion of the chain corresponds to 104 to 121 (DATHYLAEGWLFGRIGCK). A disulfide bridge connects residues Cys120 and Cys203. Residues 122-143 (VLSFIRLTSVGVSVFTLTILSA) form a helical membrane-spanning segment. Over 144–163 (DRYKAVVKPLERQPSNAILK) the chain is Cytoplasmic. Residues 164–184 (TCAKAGCIWIMSMIFALPEAI) form a helical membrane-spanning segment. The Extracellular portion of the chain corresponds to 185-220 (FSNVHTLRDPNKNMTSEWCAFYPVSEKLLQEIHALL). The helical transmembrane segment at 221-241 (SFLVFYIIPLSIISVYYSLIA) threads the bilayer. The Cytoplasmic segment spans residues 242-272 (RTLYKSTLNIPTEEQSHARKQVESRKRIAKT). Residues 273–293 (VLVLVALFALCWLPNHLLNLY) form a helical membrane-spanning segment. Over 294–313 (HSFTHKAYEDSSAIHFIVTI) the chain is Extracellular. A helical transmembrane segment spans residues 314–333 (FSRVLAFSNSCVNPFALYWL). Topologically, residues 334–399 (SKTFQKQFKA…RPMKKEENRV (66 aa)) are cytoplasmic. Cys347 carries S-palmitoyl cysteine lipidation.

It belongs to the G-protein coupled receptor 1 family. Interacts with C6orf89. Mainly in uteri of pregnant animals.

It is found in the cell membrane. Its function is as follows. Role in sperm cell division, maturation, or function. The relative order of ligand affinity is GRP = neuromedin-C &gt;&gt; neuromedin-B. This receptor mediates its action by association with G proteins that activate a phosphatidylinositol-calcium second messenger system. The protein is Bombesin receptor subtype-3 (BRS3) of Cavia porcellus (Guinea pig).